Here is a 132-residue protein sequence, read N- to C-terminus: Large-conductance mechanosensitive channel (132 aa).

The next 3 helical transmembrane spans lie at 8–28 (FALKGNVMDLAVGVVIGGAFG), 30–50 (IVSSLVSDVIMPLVGLLLGGV), and 67–87 (GAFIQTVVDFLIIAFSIFLFI).

It belongs to the MscL family. As to quaternary structure, homopentamer.

It localises to the cell membrane. Functionally, channel that opens in response to stretch forces in the membrane lipid bilayer. May participate in the regulation of osmotic pressure changes within the cell. The sequence is that of Large-conductance mechanosensitive channel from Bacillus cytotoxicus (strain DSM 22905 / CIP 110041 / 391-98 / NVH 391-98).